The chain runs to 607 residues: Phosphoenolpyruvate carboxykinase [GTP] (607 aa).

Substrate-binding positions include Arg-81 and 221-223 (YGG). Residues Lys-230 and His-250 each coordinate Mn(2+). Residue Ser-272 participates in substrate binding. 273-278 (ACGKTN) is a GTP binding site. Cys-274 is an active-site residue. Asp-297 is a binding site for Mn(2+). 388–390 (NSR) lines the substrate pocket. GTP-binding positions include Arg-390, Arg-421, and 516 to 519 (FGDN).

It belongs to the phosphoenolpyruvate carboxykinase [GTP] family. In terms of assembly, monomer. It depends on Mn(2+) as a cofactor.

The protein resides in the cytoplasm. The catalysed reaction is oxaloacetate + GTP = phosphoenolpyruvate + GDP + CO2. It participates in carbohydrate biosynthesis; gluconeogenesis. Functionally, catalyzes the conversion of oxaloacetate (OAA) to phosphoenolpyruvate (PEP), the rate-limiting step in the metabolic pathway that produces glucose from lactate and other precursors derived from the citric acid cycle. This chain is Phosphoenolpyruvate carboxykinase [GTP], found in Renibacterium salmoninarum (strain ATCC 33209 / DSM 20767 / JCM 11484 / NBRC 15589 / NCIMB 2235).